Here is a 346-residue protein sequence, read N- to C-terminus: mRNA endoribonuclease LsoA (346 aa).

In terms of assembly, can form a complex with cognate antitoxin LsoB and with enterobacteria phage T4 antitoxin Dmd.

Toxic component of a type II toxin-antitoxin (TA) system. A stable (half-life over 20 minutes) endoribonuclease that degrades mRNA. Degradation may be translation-stimulated. Overexpression in the absence of cognate antitoxin LsoB causes retarded growth and mRNA degradation, this effect is mitigated upon coexpression with antitoxin LsoB or enterobacteria phage T4 Dmd. Degrades late enterobacteria phage T4 mRNAs, protecting the host against T4 reproduction. The protein is mRNA endoribonuclease LsoA (lsoA) of Escherichia coli O157:H7.